Here is a 437-residue protein sequence, read N- to C-terminus: UDP-glucosyl transferase 79L3 (437 aa).

Residue His18 is the Proton acceptor of the active site. Asp117 functions as the Charge relay in the catalytic mechanism. UDP is bound by residues Ser254, Trp312, Val313, His330, Ser335, and Glu338.

The protein belongs to the UDP-glycosyltransferase family. Mainly expressed in flowers, flower buds and young leaves, and, to a lesser extent, in old leaves, stems and roots.

The protein operates within secondary metabolite biosynthesis; terpenoid biosynthesis. Functionally, component of the oleanane-type triterpene saponins (e.g. saponarioside A and saponarioside B) biosynthetic pathway, leading to the production of natural products with detergent properties used as traditional sources of soap. A glycosyltransferase that mediates the conversion of QA-triFR to QA-triFRX via the elongation of the C-28 sugar chain with a D-xylose. The chain is UDP-glucosyl transferase 79L3 from Saponaria officinalis (Common soapwort).